The primary structure comprises 422 residues: L-threonine dehydratase biosynthetic IlvA (422 aa).

The residue at position 60 (Lys-60) is an N6-(pyridoxal phosphate)lysine. Pyridoxal 5'-phosphate contacts are provided by residues Asn-87, 190-194 (GGGGL), and Ser-315. In terms of domain architecture, ACT-like spans 339-413 (HYFIVNFPQR…KPFHYVEVNK (75 aa)).

Belongs to the serine/threonine dehydratase family. As to quaternary structure, homotetramer. Pyridoxal 5'-phosphate is required as a cofactor.

The catalysed reaction is L-threonine = 2-oxobutanoate + NH4(+). It functions in the pathway amino-acid biosynthesis; L-isoleucine biosynthesis; 2-oxobutanoate from L-threonine: step 1/1. Catalyzes the anaerobic formation of alpha-ketobutyrate and ammonia from threonine in a two-step reaction. The first step involved a dehydration of threonine and a production of enamine intermediates (aminocrotonate), which tautomerizes to its imine form (iminobutyrate). Both intermediates are unstable and short-lived. The second step is the nonenzymatic hydrolysis of the enamine/imine intermediates to form 2-ketobutyrate and free ammonia. In the low water environment of the cell, the second step is accelerated by RidA. This chain is L-threonine dehydratase biosynthetic IlvA (ilvA), found in Bacillus subtilis (strain 168).